Consider the following 382-residue polypeptide: Succinate--CoA ligase [ADP-forming] subunit beta (382 aa).

The 232-residue stretch at 9–240 (KELFSKYGVK…PRDVTEFEAY (232 aa)) folds into the ATP-grasp domain. Residues K45, 52–54 (GRG), V94, and E99 each bind ATP. Mg(2+)-binding residues include N193 and D207. Substrate contacts are provided by residues N260 and 317–319 (GIT).

It belongs to the succinate/malate CoA ligase beta subunit family. In terms of assembly, heterotetramer of two alpha and two beta subunits. Mg(2+) serves as cofactor.

The catalysed reaction is succinate + ATP + CoA = succinyl-CoA + ADP + phosphate. It carries out the reaction GTP + succinate + CoA = succinyl-CoA + GDP + phosphate. The protein operates within carbohydrate metabolism; tricarboxylic acid cycle; succinate from succinyl-CoA (ligase route): step 1/1. Functionally, succinyl-CoA synthetase functions in the citric acid cycle (TCA), coupling the hydrolysis of succinyl-CoA to the synthesis of either ATP or GTP and thus represents the only step of substrate-level phosphorylation in the TCA. The beta subunit provides nucleotide specificity of the enzyme and binds the substrate succinate, while the binding sites for coenzyme A and phosphate are found in the alpha subunit. The chain is Succinate--CoA ligase [ADP-forming] subunit beta from Pyrobaculum aerophilum (strain ATCC 51768 / DSM 7523 / JCM 9630 / CIP 104966 / NBRC 100827 / IM2).